Reading from the N-terminus, the 364-residue chain is NF-kappa-B inhibitor epsilon (364 aa).

The disordered stretch occupies residues 1 to 108 (MSDARKGPDE…GSPLPPAGVL (108 aa)). Ser-18 is modified (phosphoserine). Residues 36-48 (PGSGSSQSGCPQP) show a composition bias toward low complexity. The span at 51–70 (HAPETHKEPEKEDADGERAD) shows a compositional bias: basic and acidic residues. A compositionally biased stretch (pro residues) spans 93-104 (PSPPAPGSPLPP). ANK repeat units follow at residues 122–155 (DGDT…DIQN), 157–186 (LYQT…SRIL), 190–219 (HGDT…EPGR), 233–262 (QGLA…DIDV), 267–296 (SGKT…RVDA), and 300–329 (NGCT…DSLL).

The protein belongs to the NF-kappa-B inhibitor family. As to quaternary structure, interacts with RELA, REL, NFKB1 nuclear factor NF-kappa-B p50 subunit and NFKB2 nuclear factor NF-kappa-B p52 subunit. Interacts with HNRNPA2B1; the interaction may be mediated by the RRM2 domain of HNRNPA2B1, and HNRNPA2B1 may interact simultaneously with FAM76B and either NFKBIA or NFKBIE to form a complex. In terms of processing, serine phosphorylated; followed by proteasome-dependent degradation.

Its subcellular location is the cytoplasm. Functionally, sequesters NF-kappa-B transcription factor complexes in the cytoplasm, thereby inhibiting their activity. Sequestered complexes include NFKB1/p50-RELA/p65 and NFKB1/p50-REL/c-Rel complexes. Limits B-cell activation in response to pathogens, and also plays an important role in B-cell development. In Mus musculus (Mouse), this protein is NF-kappa-B inhibitor epsilon (Nfkbie).